We begin with the raw amino-acid sequence, 394 residues long: Muscle cell intermediate filament protein AV71 (394 aa).

Residues 1-73 form a coil 1B region; the sequence is AEINLVRRRV…RVHDQEITEL (73 aa). In terms of domain architecture, IF rod spans 1–239; sequence AEINLVRRRV…KMLEGEENRA (239 aa). The segment at 74-91 is linker 12; sequence QAMAARDTTPENREYFKN. Residues 92–239 form a coil 2 region; that stretch reads ELSSAIRDIR…KMLEGEENRA (148 aa). The segment at 240–394 is tail; sequence GLRQLVEQVV…HIQRSSHTIN (155 aa). Positions 272-389 constitute an LTD domain; it reads SRTSFQRSAK…EERASHIQRS (118 aa).

The protein belongs to the intermediate filament family.

This Acanthocheilonema viteae (Filarial nematode worm) protein is Muscle cell intermediate filament protein AV71 (AV71).